Consider the following 355-residue polypeptide: F-box only protein 32 (355 aa).

A Nuclear localization signal motif is present at residues 62-67 (KKRKKD). Residues 169–173 (LLQTL) carry the Nuclear export signal motif. The F-box domain maps to 223 to 271 (LTFTDLPLCLQLNIMQRLSDGRDLVSLGQVAPDLHVLSEDRLLWKKLCQ). A Bipartite nuclear localization signal motif is present at residues 280–295 (RKRLILSDKGQLDWKK).

In terms of assembly, part of the SCF (SKP1-CUL1-F-box) E3 ubiquitin-protein ligase complex SCF(FBXO32) formed of CUL1, SKP1, RBX1 and FBXO32.

The protein localises to the cytoplasm. It localises to the nucleus. Its pathway is protein modification; protein ubiquitination. Substrate recognition component of a SCF (SKP1-CUL1-F-box protein) E3 ubiquitin-protein ligase complex which mediates the ubiquitination and subsequent proteasomal degradation of target proteins. Probably recognizes and binds to phosphorylated target proteins during skeletal muscle atrophy. Recognizes TERF1. The chain is F-box only protein 32 (FBXO32) from Sus scrofa (Pig).